A 403-amino-acid chain; its full sequence is Synaptotagmin-7 (403 aa).

Topologically, residues 1-16 are vesicular; it reads MYRDPEAASPGAPTRD. A helical transmembrane segment spans residues 17 to 37; that stretch reads VLLVSAIITVSLSVTIVLCGL. The Cytoplasmic segment spans residues 38 to 403; it reads CHWCQRKLGK…PVAQWHQLKA (366 aa). A Phosphoserine modification is found at Ser-52. Residues 53–103 form a disordered region; it reads LETVGTPDSGRGRGEKKAIKLPAGGKAVNTAPVPGQTPHDESDRRTETRSS. Residue Thr-58 is modified to Phosphothreonine. Ser-61 is subject to Phosphoserine. The span at 90 to 100 shows a compositional bias: basic and acidic residues; sequence PHDESDRRTET. 2 positions are modified to phosphoserine: Ser-119 and Ser-122. 2 C2 domains span residues 135–255 and 266–399; these read NLGR…TFWK and SRGE…AQWH. Asp-166 lines the Ca(2+) pocket. Residues Gly-169 and Ser-171 each carry the asymmetric dimethylarginine modification. Ca(2+) is bound by residues Asp-172, Asp-225, Asp-227, Ser-230, Asp-233, Asp-297, Asp-303, Asp-357, Asp-359, Ser-362, and Asp-365.

Belongs to the synaptotagmin family. Homodimer. Can also form heterodimers with SYT6, SYT9 and SYT10. Interacts with calmodulin (CALM1, CALM2 or CALM3). Interacts with CD63; required for localization to lysosomes. Interacts with APP. It depends on Ca(2+) as a cofactor. In terms of processing, palmitoylated at its vesicular N-terminus; palmitoylation is required for localization to lysosome and phagocytosis in macrophages. Widely expressed. Expressed in insulin-secreting cells. Present in glucagon-secreting cells (at protein level).

It is found in the cell membrane. The protein resides in the presynaptic cell membrane. It localises to the cytoplasmic vesicle. Its subcellular location is the secretory vesicle. The protein localises to the synaptic vesicle membrane. It is found in the lysosome membrane. The protein resides in the phagosome membrane. It localises to the peroxisome membrane. Its subcellular location is the secretory vesicle membrane. Its function is as follows. Ca(2+) sensor involved in Ca(2+)-dependent exocytosis of secretory and synaptic vesicles through Ca(2+) and phospholipid binding to the C2 domain. Ca(2+) induces binding of the C2-domains to phospholipid membranes and to assembled SNARE-complexes; both actions contribute to triggering exocytosis. SYT7 binds Ca(2+) with high affinity and slow kinetics compared to other synaptotagmins. Involved in Ca(2+)-triggered lysosomal exocytosis, a major component of the plasma membrane repair. Ca(2+)-regulated delivery of lysosomal membranes to the cell surface is also involved in the phagocytic uptake of particles by macrophages. Ca(2+)-triggered lysosomal exocytosis also plays a role in bone remodeling by regulating secretory pathways in osteoclasts and osteoblasts. Involved in cholesterol transport from lysosome to peroxisome by promoting membrane contacts between lysosomes and peroxisomes: probably acts by promoting vesicle fusion by binding phosphatidylinositol-4,5-bisphosphate on peroxisomal membranes. Acts as a key mediator of synaptic facilitation, a process also named short-term synaptic potentiation: synaptic facilitation takes place at synapses with a low initial release probability and is caused by influx of Ca(2+) into the axon terminal after spike generation, increasing the release probability of neurotransmitters. Probably mediates synaptic facilitation by directly increasing the probability of release. May also contribute to synaptic facilitation by regulating synaptic vesicle replenishment, a process required to ensure that synaptic vesicles are ready for the arrival of the next action potential: SYT7 is required for synaptic vesicle replenishment by acting as a sensor for Ca(2+) and by forming a complex with calmodulin. Also acts as a regulator of Ca(2+)-dependent insulin and glucagon secretion in beta-cells. Triggers exocytosis by promoting fusion pore opening and fusion pore expansion in chromaffin cells. Also regulates the secretion of some non-synaptic secretory granules of specialized cells. In Mus musculus (Mouse), this protein is Synaptotagmin-7.